A 413-amino-acid polypeptide reads, in one-letter code: Mitochondrial carrier protein MTM1 (413 aa).

3 Solcar repeats span residues 59–193 (IGFT…FRNR), 205–305 (MTFC…IKKR), and 318–406 (GVFG…VKYV). The next 6 helical transmembrane spans lie at 65–85 (VFSAAGAAVLSAVTLNPLDVV), 170–190 (NAGLALAVPMVGIYLPFYDMF), 204–226 (AMTFCVPTVAGSLARSLACTVCY), 284–304 (QLARDVPFSAICWSTLEPIKK), 316–336 (LVGVFGATFSAGFIAGSIAAA), and 378–399 (LFMGMGPRVARAGPSVGIVVSF).

It belongs to the mitochondrial carrier (TC 2.A.29) family. Ubiquitous.

The protein localises to the mitochondrion inner membrane. Its function is as follows. Involved in the mitochondrial activation of MSD1 by specifically facilitating insertion of the essential manganese cofactor. Has the ability to activate iron regulon in an iron-dependent manner. In Arabidopsis thaliana (Mouse-ear cress), this protein is Mitochondrial carrier protein MTM1 (MTM1).